Reading from the N-terminus, the 89-residue chain is MSLTKENKSNIITQFGGAVQNTGKAEVQVALFSGRITDLTGHLQKHPKDKHSRRGLLMLVGKRKKVLNYLKNVDIDRYRKVIADLDLRK.

The protein belongs to the universal ribosomal protein uS15 family. Part of the 30S ribosomal subunit. Forms a bridge to the 50S subunit in the 70S ribosome, contacting the 23S rRNA.

One of the primary rRNA binding proteins, it binds directly to 16S rRNA where it helps nucleate assembly of the platform of the 30S subunit by binding and bridging several RNA helices of the 16S rRNA. Its function is as follows. Forms an intersubunit bridge (bridge B4) with the 23S rRNA of the 50S subunit in the ribosome. The sequence is that of Small ribosomal subunit protein uS15 from Chlorobium limicola (strain DSM 245 / NBRC 103803 / 6330).